An 86-amino-acid chain; its full sequence is Allergen Hum j 3 (86 aa).

This is Allergen Hum j 3 from Humulus japonicus (Japanese hop).